Here is a 382-residue protein sequence, read N- to C-terminus: Dual-specificity RNA methyltransferase RlmN (382 aa).

The active-site Proton acceptor is Glu96. A Radical SAM core domain is found at 102–342 (QGKRGTLCVS…VRTTRGEDID (241 aa)). The cysteines at positions 109 and 345 are disulfide-linked. The [4Fe-4S] cluster site is built by Cys116, Cys120, and Cys123. S-adenosyl-L-methionine is bound by residues 170–171 (GE), Ser202, 224–226 (SLH), and Asn302. Cys345 functions as the S-methylcysteine intermediate in the catalytic mechanism.

It belongs to the radical SAM superfamily. RlmN family. [4Fe-4S] cluster serves as cofactor.

It localises to the cytoplasm. The catalysed reaction is adenosine(2503) in 23S rRNA + 2 reduced [2Fe-2S]-[ferredoxin] + 2 S-adenosyl-L-methionine = 2-methyladenosine(2503) in 23S rRNA + 5'-deoxyadenosine + L-methionine + 2 oxidized [2Fe-2S]-[ferredoxin] + S-adenosyl-L-homocysteine. It catalyses the reaction adenosine(37) in tRNA + 2 reduced [2Fe-2S]-[ferredoxin] + 2 S-adenosyl-L-methionine = 2-methyladenosine(37) in tRNA + 5'-deoxyadenosine + L-methionine + 2 oxidized [2Fe-2S]-[ferredoxin] + S-adenosyl-L-homocysteine. In terms of biological role, specifically methylates position 2 of adenine 2503 in 23S rRNA and position 2 of adenine 37 in tRNAs. m2A2503 modification seems to play a crucial role in the proofreading step occurring at the peptidyl transferase center and thus would serve to optimize ribosomal fidelity. The sequence is that of Dual-specificity RNA methyltransferase RlmN from Pseudomonas fluorescens (strain ATCC BAA-477 / NRRL B-23932 / Pf-5).